A 520-amino-acid chain; its full sequence is Transposase for insertion sequence element IS21-like (520 aa).

In terms of domain architecture, HTH IS21-type spans Tyr13–Leu78. The region spanning Leu136 to Lys312 is the Integrase catalytic domain.

The protein belongs to the transposase IS21/IS408/IS1162 family.

Its function is as follows. Involved in the transposition of the insertion sequence. The protein is Transposase for insertion sequence element IS21-like (tnpA) of Bacteroides fragilis.